Reading from the N-terminus, the 74-residue chain is U6-agatoxin-Ao1a (74 aa).

The N-terminal stretch at 1–19 (MRFYIAFFFLLLAADMALS) is a signal peptide. The propeptide occupies 20–30 (FEIGNSEELER). Intrachain disulfides connect cysteine 44/cysteine 56, cysteine 49/cysteine 61, and cysteine 55/cysteine 72.

In terms of tissue distribution, expressed by the venom gland.

It is found in the secreted. This chain is U6-agatoxin-Ao1a, found in Agelena orientalis (Funnel-web spider).